The primary structure comprises 256 residues: MASRYDRAITVFSPDGHLFQVEYAQEAVKKGSTAVGIRGTNIVVLGVEKKSVAKLQDERTVRKICALDDHVCMAFAVLTIFIGLTADARVVINRARVECQSHKLTVEDPVTVEYITRFIATLKQKYTQSNGRRPFGISALIVGFDDDGISRLYQTDPSGTYHAWKANAIGRSAKTVREFLEKNYTEDAIASDSEAIKLAIKALLEVVQSGGKNIELAIIRRNQPLKMFSAKEVELYVTEIEKEKEEAEKKKSKKSV.

The protein belongs to the peptidase T1A family. Component of the outer alpha-ring of the 20S proteasome core which is composed of 28 subunits that are arranged in four stacked rings, resulting in a barrel-shaped structure. The catalytic chamber with the active sites is on the inside of the barrel. Interacts with canonical subunits of the spermatoproteasome, including proteasome activators PSME4 (also called PA200) and PSME3 (also called PA28-gamma). Interacts with proteasome-interacting proteins chaperones, ubiquitin ligases and ubiquitin specific proteases. Interacts with meiotic proteins cyclin dependent kinase CDK1 and the ATPase TRIP13 as well as proteins of the synaptonemal complex SIX6OS1 and SYCE3.

Its subcellular location is the nucleus. Its function is as follows. Component of the spermatoproteasome, a proteasome specifically found in testis that promotes acetylation-dependent degradation of histones, thereby participating actively to the exchange of histones during spermatogenesis. The proteasome is a protein complex that degrades unneeded or damaged proteins by proteolysis, a chemical reaction that breaks peptide bonds. Required for 20S core proteasome assembly, essential for the degradation of meiotic proteins RAD51 and RPA1 at late prophase I and the progression of meiosis I during spermatogenesis. Localizes to the synaptonemal complex, a 'zipper'-like structure that holds homologous chromosome pairs in synapsis during meiotic prophase I. This is Proteasome subunit alpha-type 8 (PSMA8) from Homo sapiens (Human).